We begin with the raw amino-acid sequence, 334 residues long: DCN1-like protein 3 (334 aa).

Residues 112-301 (VSHQTLSKLF…LFDDFVDYEK (190 aa)) enclose the DCUN1 domain. The interval 308–334 (SGIHDDDNNNDDPLQSHVKAEDPGLVS) is disordered. The span at 325–334 (VKAEDPGLVS) shows a compositional bias: basic and acidic residues.

The protein localises to the cell membrane. In terms of biological role, promotes neddylation of cullin components of SCF-type E3 ubiquitin ligase complexes and thus regulates SCF-type complex activity. Function promotes cell proliferation. This Drosophila melanogaster (Fruit fly) protein is DCN1-like protein 3.